The primary structure comprises 480 residues: Protein nucleotidyltransferase YdiU (480 aa).

The ATP site is built by Gly-86, Gly-88, Arg-89, Lys-109, Asp-121, Gly-122, Arg-172, and Arg-179. The active-site Proton acceptor is Asp-248. Residues Asn-249 and Asp-258 each coordinate Mg(2+). Asp-258 contacts ATP.

This sequence belongs to the SELO family. Requires Mg(2+) as cofactor. Mn(2+) serves as cofactor.

It carries out the reaction L-seryl-[protein] + ATP = 3-O-(5'-adenylyl)-L-seryl-[protein] + diphosphate. It catalyses the reaction L-threonyl-[protein] + ATP = 3-O-(5'-adenylyl)-L-threonyl-[protein] + diphosphate. The enzyme catalyses L-tyrosyl-[protein] + ATP = O-(5'-adenylyl)-L-tyrosyl-[protein] + diphosphate. The catalysed reaction is L-histidyl-[protein] + UTP = N(tele)-(5'-uridylyl)-L-histidyl-[protein] + diphosphate. It carries out the reaction L-seryl-[protein] + UTP = O-(5'-uridylyl)-L-seryl-[protein] + diphosphate. It catalyses the reaction L-tyrosyl-[protein] + UTP = O-(5'-uridylyl)-L-tyrosyl-[protein] + diphosphate. In terms of biological role, nucleotidyltransferase involved in the post-translational modification of proteins. It can catalyze the addition of adenosine monophosphate (AMP) or uridine monophosphate (UMP) to a protein, resulting in modifications known as AMPylation and UMPylation. In Salmonella arizonae (strain ATCC BAA-731 / CDC346-86 / RSK2980), this protein is Protein nucleotidyltransferase YdiU.